Reading from the N-terminus, the 109-residue chain is Small ribosomal subunit protein bS20 (109 aa).

The interval 1–26 is disordered; sequence MANIKSAKKRAIQSEKRRKHNASRRS.

Belongs to the bacterial ribosomal protein bS20 family.

Binds directly to 16S ribosomal RNA. This is Small ribosomal subunit protein bS20 from Hamiltonella defensa subsp. Acyrthosiphon pisum (strain 5AT).